The sequence spans 60 residues: Large ribosomal subunit protein uL30 (60 aa).

The protein belongs to the universal ribosomal protein uL30 family. Part of the 50S ribosomal subunit.

This chain is Large ribosomal subunit protein uL30, found in Staphylococcus epidermidis (strain ATCC 35984 / DSM 28319 / BCRC 17069 / CCUG 31568 / BM 3577 / RP62A).